The following is a 192-amino-acid chain: MAPLGGVPGLVLLFSGKRKSGKDFVTEALQSRLGADVCAILRLSGPLKEQYAQEHGLDFQRLMDASTYKEAYRSDMIRWGEEKRQADPGFFCRKIVEGVCQPVWLVSDTRRVSDIQWFQEAYGAVTQTVRVVATEESRQQRGWVFTPGVDDAESECGLDNFRTFDWVIENHGDEQHLEEQLEHLIEFIRSRL.

Residues 17–23 and arginine 141 contribute to the ATP site; that span reads KRKSGKD. Asparagine 170 lines the substrate pocket. ATP is bound by residues histidine 171 and glutamine 180.

In terms of assembly, monomer.

Its subcellular location is the cytoplasm. It localises to the cytosol. The enzyme catalyses (R)-5-phosphomevalonate + ATP = (R)-5-diphosphomevalonate + ADP. The protein operates within isoprenoid biosynthesis; isopentenyl diphosphate biosynthesis via mevalonate pathway; isopentenyl diphosphate from (R)-mevalonate: step 2/3. Catalyzes the reversible ATP-dependent phosphorylation of mevalonate 5-phosphate to produce mevalonate diphosphate and ADP, a key step in the mevalonic acid mediated biosynthesis of isopentenyl diphosphate and other polyisoprenoid metabolites. The protein is Phosphomevalonate kinase (PMVK) of Bos taurus (Bovine).